The following is a 429-amino-acid chain: Enolase 1 (429 aa).

Gln-163 contacts (2R)-2-phosphoglycerate. The active-site Proton donor is Glu-205. 3 residues coordinate Mg(2+): Asp-242, Glu-287, and Asp-314. Residues Lys-339, Arg-368, Ser-369, and Lys-390 each coordinate (2R)-2-phosphoglycerate. Residue Lys-339 is the Proton acceptor of the active site.

It belongs to the enolase family. It depends on Mg(2+) as a cofactor.

The protein localises to the cytoplasm. The protein resides in the secreted. Its subcellular location is the cell surface. The catalysed reaction is (2R)-2-phosphoglycerate = phosphoenolpyruvate + H2O. It functions in the pathway carbohydrate degradation; glycolysis; pyruvate from D-glyceraldehyde 3-phosphate: step 4/5. Its function is as follows. Catalyzes the reversible conversion of 2-phosphoglycerate (2-PG) into phosphoenolpyruvate (PEP). It is essential for the degradation of carbohydrates via glycolysis. In Cupriavidus metallidurans (strain ATCC 43123 / DSM 2839 / NBRC 102507 / CH34) (Ralstonia metallidurans), this protein is Enolase 1.